The primary structure comprises 230 residues: Large ribosomal subunit protein uL1 (230 aa).

Belongs to the universal ribosomal protein uL1 family. In terms of assembly, part of the 50S ribosomal subunit.

Binds directly to 23S rRNA. The L1 stalk is quite mobile in the ribosome, and is involved in E site tRNA release. In terms of biological role, protein L1 is also a translational repressor protein, it controls the translation of the L11 operon by binding to its mRNA. The polypeptide is Large ribosomal subunit protein uL1 (Acholeplasma laidlawii (strain PG-8A)).